A 66-amino-acid chain; its full sequence is Large ribosomal subunit protein bL35 (66 aa).

2 stretches are compositionally biased toward basic residues: residues 1–15 (MSKLKTRSSAAKRFK) and 22–43 (ILHKKAGKRHNLSKKSESRKRR). A disordered region spans residues 1 to 43 (MSKLKTRSSAAKRFKVTATGKILHKKAGKRHNLSKKSESRKRR).

It belongs to the bacterial ribosomal protein bL35 family.

The protein is Large ribosomal subunit protein bL35 of Dictyoglomus turgidum (strain DSM 6724 / Z-1310).